A 203-amino-acid polypeptide reads, in one-letter code: uncharacterized protein (203 aa).

The first 23 residues, 1 to 23 (MKKIYKALISSLLLSTSINVAYA), serve as a signal peptide directing secretion. The SH3b domain occupies 24-87 (ETQYVTENLS…ILNSDLSSTP (64 aa)). The helical transmembrane segment at 167 to 189 (IAIQWFIYGGSVLGVGLLFGLLI) threads the bilayer.

The protein to E.coli YgiM.

Its subcellular location is the membrane. This is an uncharacterized protein from Haemophilus influenzae (strain ATCC 51907 / DSM 11121 / KW20 / Rd).